Reading from the N-terminus, the 500-residue chain is Glycerol kinase (500 aa).

Residue threonine 16 coordinates ADP. Residues threonine 16 and threonine 17 each contribute to the ATP site. Threonine 16 contributes to the sn-glycerol 3-phosphate binding site. Residue arginine 20 participates in ADP binding. Sn-glycerol 3-phosphate-binding residues include arginine 86, glutamate 87, tyrosine 138, and aspartate 243. 5 residues coordinate glycerol: arginine 86, glutamate 87, tyrosine 138, aspartate 243, and glutamine 244. The ADP site is built by threonine 265 and glycine 313. Positions 265, 313, 317, and 414 each coordinate ATP. ADP-binding residues include glycine 414 and asparagine 418.

Belongs to the FGGY kinase family.

The catalysed reaction is glycerol + ATP = sn-glycerol 3-phosphate + ADP + H(+). Its pathway is polyol metabolism; glycerol degradation via glycerol kinase pathway; sn-glycerol 3-phosphate from glycerol: step 1/1. Inhibited by fructose 1,6-bisphosphate (FBP). In terms of biological role, key enzyme in the regulation of glycerol uptake and metabolism. Catalyzes the phosphorylation of glycerol to yield sn-glycerol 3-phosphate. This chain is Glycerol kinase, found in Trichormus variabilis (strain ATCC 29413 / PCC 7937) (Anabaena variabilis).